The following is a 117-amino-acid chain: Resistin-like gamma (117 aa).

The N-terminal stretch at 1-29 (MLTFNKMKTTTCSLLICISLLQLMVPVNT) is a signal peptide. 5 cysteine pairs are disulfide-bonded: C61–C114, C73–C113, C82–C99, C84–C101, and C88–C103.

The protein belongs to the resistin/FIZZ family. Homodimer. Heterodimer with RETNLB. In terms of tissue distribution, expressed in colon, lung, spleen, pancreas, ileum and bone marrow (at protein level). In colon, found throughout the crypt and surface epithelium, including goblet cells (at protein level). Highest expression is observed in bone marrow, spleen and lung, with lower levels in other tissues. Detected at low levels in granulocytes, but not found in monocytes or lymphocytes. Has very weak expression in white adipose tissue.

It is found in the secreted. In terms of biological role, probable hormone. Promotes chemotaxis in myeloid cells. This chain is Resistin-like gamma, found in Mus musculus (Mouse).